Consider the following 373-residue polypeptide: Inhibitor of nuclear factor kappa-B kinase-interacting protein (373 aa).

Residues Met1 to Gly11 show a composition bias toward basic residues. Positions Met1 to Ala38 are disordered. Residues Glu18–Gly33 are compositionally biased toward basic and acidic residues. A helical membrane pass occupies residues Gly43 to Val59. Coiled coils occupy residues Leu86–Ser257 and Gln285–Gly324. Asn151 carries N-linked (GlcNAc...) asparagine glycosylation.

In terms of processing, N-glycosylated at Asn-151.

The protein resides in the endoplasmic reticulum membrane. Target of p53/TP53 with pro-apoptotic function. This Mus musculus (Mouse) protein is Inhibitor of nuclear factor kappa-B kinase-interacting protein (Ikbip).